A 361-amino-acid chain; its full sequence is Histidine biosynthesis bifunctional protein HisB (361 aa).

A histidinol-phosphatase region spans residues 1–172 (MTQPTLFIDR…PKTTACKRPP (172 aa)). The active-site Nucleophile is the D9. Residues D9 and D11 each contribute to the Mg(2+) site. The active-site Proton donor is D11. 4 residues coordinate Zn(2+): C92, H94, C100, and C102. Position 129 (D129) interacts with Mg(2+). The interval 173–361 (RYAEVVRTTK…NELPSSKGVL (189 aa)) is imidazoleglycerol-phosphate dehydratase.

The protein in the N-terminal section; belongs to the histidinol-phosphatase family. It in the C-terminal section; belongs to the imidazoleglycerol-phosphate dehydratase family. Requires Mg(2+) as cofactor. Zn(2+) serves as cofactor.

It is found in the cytoplasm. The catalysed reaction is D-erythro-1-(imidazol-4-yl)glycerol 3-phosphate = 3-(imidazol-4-yl)-2-oxopropyl phosphate + H2O. It catalyses the reaction L-histidinol phosphate + H2O = L-histidinol + phosphate. Its pathway is amino-acid biosynthesis; L-histidine biosynthesis; L-histidine from 5-phospho-alpha-D-ribose 1-diphosphate: step 6/9. It participates in amino-acid biosynthesis; L-histidine biosynthesis; L-histidine from 5-phospho-alpha-D-ribose 1-diphosphate: step 8/9. The sequence is that of Histidine biosynthesis bifunctional protein HisB from Actinobacillus pleuropneumoniae serotype 3 (strain JL03).